A 330-amino-acid polypeptide reads, in one-letter code: Phenylalanine--tRNA ligase alpha subunit (330 aa).

E246 is a binding site for Mg(2+).

The protein belongs to the class-II aminoacyl-tRNA synthetase family. Phe-tRNA synthetase alpha subunit type 1 subfamily. In terms of assembly, tetramer of two alpha and two beta subunits. The cofactor is Mg(2+).

The protein resides in the cytoplasm. The catalysed reaction is tRNA(Phe) + L-phenylalanine + ATP = L-phenylalanyl-tRNA(Phe) + AMP + diphosphate + H(+). This Sulfurovum sp. (strain NBC37-1) protein is Phenylalanine--tRNA ligase alpha subunit.